The chain runs to 662 residues: Acyl-coenzyme A oxidase acox-1.4 (662 aa).

Residues 148-151 (YAQT), 156-157 (GT), and glycine 190 each bind FAD. Substrate contacts are provided by residues 284–287 (KVNH) and arginine 294. FAD-binding positions include arginine 319 and 339–342 (QQHR). ATP-binding residues include histidine 341, serine 391, histidine 395, and glutamine 403. Residue glycine 410 participates in FAD binding. 432-433 (YE) is a binding site for substrate. The Proton acceptor role is filled by glutamate 433. Glutamate 435 is a binding site for FAD. Residues 526 to 529 (RASR) and tyrosine 574 contribute to the ATP site. Positions 660–662 (AKL) match the Microbody targeting signal motif.

This sequence belongs to the acyl-CoA oxidase family. Homodimer. It depends on FAD as a cofactor.

It is found in the peroxisome. It catalyses the reaction asc-C9-CoA + O2 = asc-DeltaC9-CoA + H2O2. The protein operates within lipid metabolism; peroxisomal fatty acid beta-oxidation. Its activity is regulated as follows. Activated by ATP. ATP binding leads to a conformational change that promotes FAD cofactor binding and enzyme activity. ATP binding likely occurs during acox-1.4 folding and/or dimer formation. Involved in the first step of peroxisomal beta-oxidation by catalyzing the desaturation of fatty acid-derived side chains of ascaroside pheromones, which regulates development and behavior. Specifically, shortens ascarosides with a 9-carbon side chain (asc-C9) and, in association with acox-1.1, may contribute to the shortening of ascarosides with a 11-carbon side chain (asc-C11). May contribute to the production of indol-3-carbonyl(IC)-ascarosides in association with acox-1.1 and acox-3. In Caenorhabditis elegans, this protein is Acyl-coenzyme A oxidase acox-1.4.